A 241-amino-acid polypeptide reads, in one-letter code: Ashwin (241 aa).

3 disordered regions span residues 1–21, 82–102, and 212–241; these read MAAQGRGRVGGGKEERVSARS, KMMEKKRKQNEPKSENKSVTA, and KRSVPKDESDLPNDLKPTEAKKKIQHCTWP. Over residues 11–21 the composition is skewed to basic and acidic residues; the sequence is GGKEERVSARS.

The protein belongs to the ashwin family.

The protein resides in the nucleus. This Gallus gallus (Chicken) protein is Ashwin.